We begin with the raw amino-acid sequence, 183 residues long: Large ribosomal subunit protein uL5 (183 aa).

The protein belongs to the universal ribosomal protein uL5 family. Part of the 50S ribosomal subunit; part of the 5S rRNA/L5/L18/L25 subcomplex. Contacts the 5S rRNA and the P site tRNA. Forms a bridge to the 30S subunit in the 70S ribosome.

This is one of the proteins that bind and probably mediate the attachment of the 5S RNA into the large ribosomal subunit, where it forms part of the central protuberance. In the 70S ribosome it contacts protein S13 of the 30S subunit (bridge B1b), connecting the 2 subunits; this bridge is implicated in subunit movement. Contacts the P site tRNA; the 5S rRNA and some of its associated proteins might help stabilize positioning of ribosome-bound tRNAs. This is Large ribosomal subunit protein uL5 from Corynebacterium aurimucosum (strain ATCC 700975 / DSM 44827 / CIP 107346 / CN-1) (Corynebacterium nigricans).